We begin with the raw amino-acid sequence, 399 residues long: MDSHPYAWIEAALETVKRAHWYRSVQTIEGRPGAEVELAGQRVLNFASNDYLGLAGDQRLIRAAIQATEQLGTGSTGSRLLTGHRELHRQLERAIAQLKQTEDALVFSSGYLANLGTIAALVGPRDLILSDQYNHSSLKKGASLSGAKVLDYPHLDMGGLAELLQTHRSNYRRCLILTDTVFSMEGDVCPLPQLLAITTAHNAMVLVDEAHATGVLGATGAGAVEHWGCTDQTLIQVGTLSKALGSLGGYVAGTAVLIDFLRNRCPGWIYTTALSPADTAAALAAIAVVQSEPQRRIQLHENVQGVQAQLQNLPQLQEPRGRFRLLPSQSAILAVQMPDPATALEVGNALKQAGIFAPVIRPPTVPTSRLRLSLMATHTPDHCQRLGVAITTALARSLS.

Arginine 23 contributes to the substrate binding site. 110 to 111 serves as a coordination point for pyridoxal 5'-phosphate; that stretch reads GY. Histidine 135 serves as a coordination point for substrate. Residues serine 183, 208–211, and 239–242 each bind pyridoxal 5'-phosphate; these read DEAH and TLSK. At lysine 242 the chain carries N6-(pyridoxal phosphate)lysine. Position 364 (threonine 364) interacts with substrate.

It belongs to the class-II pyridoxal-phosphate-dependent aminotransferase family. BioF subfamily. Homodimer. Requires pyridoxal 5'-phosphate as cofactor.

It carries out the reaction 6-carboxyhexanoyl-[ACP] + L-alanine + H(+) = (8S)-8-amino-7-oxononanoate + holo-[ACP] + CO2. It functions in the pathway cofactor biosynthesis; biotin biosynthesis. Its function is as follows. Catalyzes the decarboxylative condensation of pimeloyl-[acyl-carrier protein] and L-alanine to produce 8-amino-7-oxononanoate (AON), [acyl-carrier protein], and carbon dioxide. The protein is Putative 8-amino-7-oxononanoate synthase (bioF) of Cyanothece sp. (strain PCC 7425 / ATCC 29141).